Consider the following 290-residue polypeptide: Putative beta-lactamase HcpC (290 aa).

A signal peptide spans 1 to 25 (MLENVKKSFFRVLCLGALCLGGLMA). 7 TPR repeats span residues 29 to 62 (PKELVGLGAKSYKEKDFTQAKKYFEKACDLKENS), 64 to 98 (CFNLGVLYYQGQGVEKNLKKAASFYAKACDLNYSN), 100 to 133 (CHLLGNLYYSGQGVSQNTNKALQYYSKACDLKYA), 134 to 170 (EGCASLGGIYHDGKVVTRDFKKAVEYFTKACDLNDGD), 172 to 205 (CTILGSLYDAGRGTPKDLKKALASYDKACDLKDS), 206 to 242 (PGCFNAGNMYHHGEGATKNFKEALARYSKACELENGG), and 244 to 278 (CFNLGAMQYNGEGVTRNEKQAIENFKKGCKLGAKG). Disulfide bonds link cysteine 56–cysteine 64, cysteine 92–cysteine 100, cysteine 128–cysteine 136, cysteine 164–cysteine 172, cysteine 200–cysteine 208, cysteine 236–cysteine 244, and cysteine 272–cysteine 280.

It belongs to the hcp beta-lactamase family.

The protein localises to the secreted. It catalyses the reaction a beta-lactam + H2O = a substituted beta-amino acid. In terms of biological role, may hydrolyze 6-aminopenicillinic acid and 7-aminocephalosporanic acid (ACA) derivatives. This Helicobacter pylori (strain ATCC 700392 / 26695) (Campylobacter pylori) protein is Putative beta-lactamase HcpC (hcpC).